We begin with the raw amino-acid sequence, 1213 residues long: Probable ATP-binding protein BrxC (1213 aa).

The protein belongs to the BrxC family.

BREX systems (bacteriophage exclusion) provide immunity against bacteriophage. Part of a type 1 BREX system which protects against dsDNA phage. This system allows phage adsorption but prevents phage DNA replication, without degradation of the phage DNA. Methylation of bacterial DNA by PglX guides self/non-self discrimination. When the brxA-brxB-brxC-pglX-pglZ-brxL genes are transformed into a susceptible E.coli strain (BW25113) they confer very high resistance to infection by bacteriophage VR7 and VpaE1, about 100-fold protection against lambda, T5 and T7 and no protection against RNA phage Qbeta, ssDNA phage M13 or dSDNA phage T4 and VR5. Glycosylated phage DNA is not susceptible to BREX. The BREX system does not confer resistance to lysogenic lambda phage, i.e. prophage that are integrated into the chromosomal DNA and then induced to form phage. The protein is Probable ATP-binding protein BrxC of Escherichia coli O9:H4 (strain HS).